The chain runs to 105 residues: MPTIIVTTRDGEELSLEADTGLSLMEVIRDGGADELLALCGGCCSCATCHVKVDPAFLAALPPMSEDESDLLDSSDHRDATSRLSCQITVDDGLAGLRVAIAPED.

The region spanning 2-105 (PTIIVTTRDG…GLRVAIAPED (104 aa)) is the 2Fe-2S ferredoxin-type domain. Residues C40, C46, C49, and C86 each coordinate [2Fe-2S] cluster.

The protein belongs to the adrenodoxin/putidaredoxin family. In terms of assembly, the chloroacetanilide N-alkylformylase multicomponent enzyme system is composed of an oxygenase component (CndA) and an electron transfer component formed by a ferredoxin reductase (CndC1) and a ferredoxin (CndB1). In vitro, chloroacetanilide N-alkylformylase assays in which CndB1 is substituted for CndB2 demonstrate that the two enzymes possess nearly identical activities. The cofactor is [2Fe-2S] cluster.

In terms of biological role, component of the chloroacetanilide N-alkylformylase multicomponent enzyme system involved in the degradation of chloroacetanilide herbicides (N-alkoxyalkyl-N-chloroacetyl-substituted aniline derivatives). In vitro, functions as an intermediate electron transfer protein. This Rhizorhabdus wittichii (strain DC-6 / KACC 16600) (Sphingomonas wittichii) protein is Chloroacetanilide N-alkylformylase 1, ferredoxin component.